Consider the following 142-residue polypeptide: MTTPSMEDYIEQIYMLIEEKGYARVSDIAEALAVHPSSVTKMVQKLDKDEYLIYEKYRGLVLTSKGKKIGKRLVYRHELLEQFLRIIGVDEEKIYNDVEGIEHHLSWNSIDRIGDLVQYFEDDESRKKELKSVQKKTENPGE.

Positions 1–63 constitute an HTH dtxR-type domain; sequence MTTPSMEDYI…YEKYRGLVLT (63 aa). Asp-8, Glu-11, His-77, Glu-99, Glu-102, and His-103 together coordinate Mn(2+).

It belongs to the DtxR/MntR family. In terms of assembly, homodimer.

It is found in the cytoplasm. DNA binding is strongly activated by Mn(2+). Functionally, central regulator of manganese homeostasis. This Bacillus velezensis (strain DSM 23117 / BGSC 10A6 / LMG 26770 / FZB42) (Bacillus amyloliquefaciens subsp. plantarum) protein is HTH-type transcriptional regulator MntR.